The chain runs to 239 residues: MLVIPAIDLQSGRCVRLKQGRFDQVTQFSVFPIERALHFAKLGAKRLHVVDLDGARSGKMQQLELICSMQKTGIPIQAGGGIRSIEQALECSNAGISQLVIGSLAITNPDLTIQIIEKIKPENIVLALDVRVDTKVPLLAINGWQNNSTSSLWEVVSYYENYGIKNILCTDIACDGMMNGPNFDLYQQAVEYFPQIAWQASGGVRHMQDITTLNSLGISAVILGLMLYQDHMNLEELLC.

The active-site Proton acceptor is Asp-8. Asp-129 serves as the catalytic Proton donor.

It belongs to the HisA/HisF family.

Its subcellular location is the cytoplasm. It carries out the reaction 1-(5-phospho-beta-D-ribosyl)-5-[(5-phospho-beta-D-ribosylamino)methylideneamino]imidazole-4-carboxamide = 5-[(5-phospho-1-deoxy-D-ribulos-1-ylimino)methylamino]-1-(5-phospho-beta-D-ribosyl)imidazole-4-carboxamide. Its pathway is amino-acid biosynthesis; L-histidine biosynthesis; L-histidine from 5-phospho-alpha-D-ribose 1-diphosphate: step 4/9. This chain is 1-(5-phosphoribosyl)-5-[(5-phosphoribosylamino)methylideneamino] imidazole-4-carboxamide isomerase, found in Legionella pneumophila subsp. pneumophila (strain Philadelphia 1 / ATCC 33152 / DSM 7513).